A 313-amino-acid polypeptide reads, in one-letter code: Porphobilinogen deaminase (313 aa).

Cysteine 242 bears the S-(dipyrrolylmethanemethyl)cysteine mark.

It belongs to the HMBS family. Monomer. Dipyrromethane serves as cofactor.

It catalyses the reaction 4 porphobilinogen + H2O = hydroxymethylbilane + 4 NH4(+). Its pathway is porphyrin-containing compound metabolism; protoporphyrin-IX biosynthesis; coproporphyrinogen-III from 5-aminolevulinate: step 2/4. Tetrapolymerization of the monopyrrole PBG into the hydroxymethylbilane pre-uroporphyrinogen in several discrete steps. This chain is Porphobilinogen deaminase, found in Yersinia pseudotuberculosis serotype O:1b (strain IP 31758).